The chain runs to 1224 residues: Probable serine/threonine-protein kinase DDB_G0292350 (1224 aa).

Disordered stretches follow at residues 57–98 (MSGS…STQR) and 252–284 (SSPS…DISN). Composition is skewed to low complexity over residues 58 to 74 (SGSI…FTSS) and 83 to 95 (SSSN…SDNS). Coiled coils occupy residues 352-381 (LFKQ…KQNN) and 540-569 (DVQL…EYLT). Disordered stretches follow at residues 693-784 (QPIP…FVIT) and 815-836 (FTNN…TNNI). A compositionally biased stretch (low complexity) spans 743–768 (NNNNNNNNNINNNNINNNNINNNKNG). Residues 772–784 (GETPSPSSSFVIT) show a composition bias toward polar residues. One can recognise a Protein kinase domain in the interval 935-1193 (FRDKIKLGTG…PEMLLHHTFL (259 aa)). Residues 941-949 (LGTGAFGNV) and Lys-964 each bind ATP. Residue Asp-1063 is the Proton acceptor of the active site.

This sequence belongs to the protein kinase superfamily. Ser/Thr protein kinase family. Mg(2+) serves as cofactor.

The catalysed reaction is L-seryl-[protein] + ATP = O-phospho-L-seryl-[protein] + ADP + H(+). It catalyses the reaction L-threonyl-[protein] + ATP = O-phospho-L-threonyl-[protein] + ADP + H(+). The sequence is that of Probable serine/threonine-protein kinase DDB_G0292350 from Dictyostelium discoideum (Social amoeba).